Here is a 340-residue protein sequence, read N- to C-terminus: MDSGSVAAERPRRTPSRQRLPSSGCGVPARPGVSTLPGGRSWLRPRGRAARASPLLFLLLVPSPRLAATATATAPRRTLAERSRPGLVLPAAALGAGRNALGRLRLGARRVAALASSRRELSLSAKCHQLEHRKENLPLSVSRQLYFDTHALVCLLEANGFTIQQAEIIVSALVKITETNMNIIYKDMVSKMQQEIALQQVLSKIANVKKDMVILEKSEFSALRAENEKIKLELHQLKQQVMDEVTKVRTDTKLNFNLEKSRVKELYSLNEKKMLELRTEIVSLHAQQDRALTQTDRKIETEVAGLKTMLEAHKLDTIKYLAGSVFTCLTVALGFYRLWI.

The segment at 1–44 (MDSGSVAAERPRRTPSRQRLPSSGCGVPARPGVSTLPGGRSWLR) is disordered. Topologically, residues 1–54 (MDSGSVAAERPRRTPSRQRLPSSGCGVPARPGVSTLPGGRSWLRPRGRAARASP) are mitochondrial intermembrane. The helical transmembrane segment at 55–74 (LLFLLLVPSPRLAATATATA) threads the bilayer. Over 75 to 316 (PRRTLAERSR…KTMLEAHKLD (242 aa)) the chain is Mitochondrial matrix. Positions 197–291 (ALQQVLSKIA…VSLHAQQDRA (95 aa)) form a coiled coil. Position 204 is an N6-acetyllysine (Lys204). Residues 317-339 (TIKYLAGSVFTCLTVALGFYRLW) traverse the membrane as a helical segment. Residue Ile340 is a topological domain, mitochondrial intermembrane.

The protein belongs to the CCDC90 family. Interacts (via coiled coil regions) with MCU; the interaction is direct. Interacts with SMDT1/EMRE; the interaction is direct. Interacts with PPIF.

The protein localises to the mitochondrion inner membrane. Its function is as follows. Key regulator of mitochondrial calcium uniporter (MCU) required for calcium entry into mitochondrion. Plays a direct role in uniporter-mediated calcium uptake via a direct interaction with MCU. Probably involved in the assembly of the membrane components of the uniporter complex (uniplex). The protein is Mitochondrial calcium uniporter regulator 1 of Mus musculus (Mouse).